The sequence spans 122 residues: Large ribosomal subunit protein uL14 (122 aa).

This sequence belongs to the universal ribosomal protein uL14 family. In terms of assembly, part of the 50S ribosomal subunit. Forms a cluster with proteins L3 and L19. In the 70S ribosome, L14 and L19 interact and together make contacts with the 16S rRNA in bridges B5 and B8.

Binds to 23S rRNA. Forms part of two intersubunit bridges in the 70S ribosome. The sequence is that of Large ribosomal subunit protein uL14 from Renibacterium salmoninarum (strain ATCC 33209 / DSM 20767 / JCM 11484 / NBRC 15589 / NCIMB 2235).